Reading from the N-terminus, the 1690-residue chain is DNA-directed RNA polymerase subunit beta' (1690 aa).

4 residues coordinate Zn(2+): C63, C65, C78, and C81. Mg(2+) contacts are provided by D753, D755, and D757. C1107, C1295, C1302, and C1305 together coordinate Zn(2+).

It belongs to the RNA polymerase beta' chain family. As to quaternary structure, the RNAP catalytic core consists of 2 alpha, 1 beta, 1 beta' and 1 omega subunit. When a sigma factor is associated with the core the holoenzyme is formed, which can initiate transcription. Requires Mg(2+) as cofactor. Zn(2+) is required as a cofactor.

The catalysed reaction is RNA(n) + a ribonucleoside 5'-triphosphate = RNA(n+1) + diphosphate. DNA-dependent RNA polymerase catalyzes the transcription of DNA into RNA using the four ribonucleoside triphosphates as substrates. The sequence is that of DNA-directed RNA polymerase subunit beta' from Thermotoga maritima (strain ATCC 43589 / DSM 3109 / JCM 10099 / NBRC 100826 / MSB8).